Here is a 204-residue protein sequence, read N- to C-terminus: Ras-related protein RabQ (204 aa).

12 to 19 (GPPFVGKS) is a binding site for GTP. An Effector region motif is present at residues 34–42 (MDTTIGVEF). Residues 60 to 64 (DTAGQ) and 118 to 121 (NKCD) each bind GTP. Residues cysteine 202 and cysteine 203 are each lipidated (S-geranylgeranyl cysteine).

It belongs to the small GTPase superfamily. Rab family.

The protein localises to the cell membrane. This Dictyostelium discoideum (Social amoeba) protein is Ras-related protein RabQ (rabQ).